Here is a 305-residue protein sequence, read N- to C-terminus: Oxidoreductase OpS7 (305 aa).

It belongs to the oxidoreductase OpS7 family.

The protein operates within secondary metabolite biosynthesis. In terms of biological role, oxidoreductase; part of the gene cluster that mediates the biosynthesis of the bibenzoquinone oosporein, a metabolite required for fungal virulence that acts by evading host immunity to facilitate fungal multiplication in insects. The non-reducing polyketide synthase OpS1 produces orsellinic acid by condensing acetyl-CoA with 3 malonyl-CoA units. Orsellinic acid is then hydroxylated to benzenetriol by the hydroxylase OpS4. The intermediate is oxidized either nonenzymatically to 5,5'-dideoxy-oosporein or enzymatically to benzenetetrol by the oxidoreductase OpS7. The latter is further dimerized to oosporein by the catalase OpS5. OpS6 probably functions en route for protecting cells against oxidative stress by scavenging any leaked free radical form of benzenetetrol by activating the thiol group of glutathione. The protein is Oxidoreductase OpS7 of Beauveria bassiana (strain ARSEF 2860) (White muscardine disease fungus).